Here is an 836-residue protein sequence, read N- to C-terminus: Spliceosome associated factor 3, U4/U6 recycling protein (836 aa).

HAT repeat units follow at residues 127-163, 296-329, 331-367, 418-451, and 453-486; these read EDFKFCRDVCSKALENLGTRYDSGGHIWLIFLEYEMS, KLPQVAVKVYSRALRHCPYSFVLHQQALLAFERD, RPNEEIDALWERARSNVINSAEEGRSLYRTYAFLLRR, KNMDKCRNIWNDILASGFGRFAGKWIEAVRLERQ, and GDKENARKYLNKALNSVSDNINEIYMYYVQFERE. Residues 507–585 are disordered; that stretch reads RAIRPQKKVS…APGSFAVQKA (79 aa). Positions 540–550 are enriched in basic and acidic residues; it reads IVKKVKGDDGG. Over residues 558-579 the composition is skewed to low complexity; that stretch reads SNAKSSSAVSSSNASSTPAPGS. 2 RRM domains span residues 593–668 and 683–760; these read RTIF…ANDP and SKVF…LSNP. 2 disordered regions span residues 757–786 and 811–830; these read LSNPPVKKDKSHGKPAAIGASLEEDGPRKG and AMDVSEGTSTSQPLSNDQFR. The segment covering 816–827 has biased composition (polar residues); it reads EGTSTSQPLSND.

In terms of assembly, forms a complex composed of sart-3, terminal uridylyltransferase usip-1 and U6 snRNA; complex formation is mediated by usip-1 and sart-3 binding to U6 snRNA. Associates with U4 and U6 snRNP complexes, probably by interacting with U4 and U6 snRNAs. In terms of tissue distribution, ubiquitously expressed.

The protein localises to the nucleus. The protein resides in the nucleoplasm. Its function is as follows. U6 snRNP-binding protein that functions as a recycling factor of the splicing machinery. Promotes the initial reassembly of U4 and U6 snRNPs following their ejection from the spliceosome during its maturation. This chain is Spliceosome associated factor 3, U4/U6 recycling protein, found in Caenorhabditis elegans.